The primary structure comprises 160 residues: MLKKRKTTVYALGQYLSMSAHKARRVIDQIRGRSYEETLMILELMPYRACYPIFKLVYSAAANASYNMDSNESNLVISKAEVSEGTIVKKLKPRARGRSFPIKRPTCHISIVVKDISLDEYIEVDFLDPLRWSKKLKSKKKYTAMAYHNMYSNGGVWDKK.

This sequence belongs to the universal ribosomal protein uL22 family. Part of the 50S ribosomal subunit.

It localises to the plastid. Its subcellular location is the chloroplast. Its function is as follows. This protein binds specifically to 23S rRNA. The globular domain of the protein is located near the polypeptide exit tunnel on the outside of the subunit, while an extended beta-hairpin is found that lines the wall of the exit tunnel in the center of the 70S ribosome. The chain is Large ribosomal subunit protein uL22c (rpl22) from Panax ginseng (Korean ginseng).